A 50-amino-acid polypeptide reads, in one-letter code: Mast cell degranulating peptide (50 aa).

The N-terminal stretch at 1–27 is a signal peptide; sequence MISMLRCTFFFLSVILITSYFVTPTMS. At Lys29 the chain carries N6-formyllysine; partial. Cystine bridges form between Cys30/Cys42 and Cys32/Cys46. An N6-formyllysine; partial mark is found at Lys44 and Lys48. Asn49 bears the Asparagine amide mark.

In terms of tissue distribution, expressed by the venom gland.

The protein localises to the secreted. Its function is as follows. Potent anti-inflammatory agent. At low concentrations, mediates the degranulation of mast cells thus evoking an inflammatory response. Also acts as a neurotoxin capable of blocking a class of voltage-gated potassium channels. The polypeptide is Mast cell degranulating peptide (Apis mellifera (Honeybee)).